The sequence spans 198 residues: MKSPSSLAFLTEALRRLPGVGPKSAQRMAYHLMQHDRDGAAMLGRALSQAVERVQHCAMCNTFTESAVCETCLDAERNAALLCVVETPGDQLMIEQTLTFKGLYFVLMGRLSPLDGIGPKDIHLEKLISRATDGIVQEVVLATNFTNEGEATAHYISETLKARGLKVSRLARGVPVGGELEYVDAGTIARAMLDRRTT.

The C4-type zinc-finger motif lies at 57 to 72 (CAMCNTFTESAVCETC). Residues 80–175 (ALLCVVETPG…KVSRLARGVP (96 aa)) form the Toprim domain.

It belongs to the RecR family.

Functionally, may play a role in DNA repair. It seems to be involved in an RecBC-independent recombinational process of DNA repair. It may act with RecF and RecO. This is Recombination protein RecR from Herminiimonas arsenicoxydans.